Reading from the N-terminus, the 349-residue chain is Phenylalanine--tRNA ligase alpha subunit (349 aa).

Glu-259 serves as a coordination point for Mg(2+).

It belongs to the class-II aminoacyl-tRNA synthetase family. Phe-tRNA synthetase alpha subunit type 1 subfamily. As to quaternary structure, tetramer of two alpha and two beta subunits. It depends on Mg(2+) as a cofactor.

It is found in the cytoplasm. It carries out the reaction tRNA(Phe) + L-phenylalanine + ATP = L-phenylalanyl-tRNA(Phe) + AMP + diphosphate + H(+). This chain is Phenylalanine--tRNA ligase alpha subunit, found in Lactobacillus delbrueckii subsp. bulgaricus (strain ATCC 11842 / DSM 20081 / BCRC 10696 / JCM 1002 / NBRC 13953 / NCIMB 11778 / NCTC 12712 / WDCM 00102 / Lb 14).